The following is a 419-amino-acid chain: Serine hydroxymethyltransferase (419 aa).

(6S)-5,6,7,8-tetrahydrofolate-binding positions include Leu-121 and Gly-125 to Leu-127. Lys-229 is subject to N6-(pyridoxal phosphate)lysine. Ser-354–Phe-356 is a binding site for (6S)-5,6,7,8-tetrahydrofolate.

This sequence belongs to the SHMT family. Homodimer. Pyridoxal 5'-phosphate is required as a cofactor.

It is found in the cytoplasm. The catalysed reaction is (6R)-5,10-methylene-5,6,7,8-tetrahydrofolate + glycine + H2O = (6S)-5,6,7,8-tetrahydrofolate + L-serine. Its pathway is one-carbon metabolism; tetrahydrofolate interconversion. The protein operates within amino-acid biosynthesis; glycine biosynthesis; glycine from L-serine: step 1/1. Catalyzes the reversible interconversion of serine and glycine with tetrahydrofolate (THF) serving as the one-carbon carrier. This reaction serves as the major source of one-carbon groups required for the biosynthesis of purines, thymidylate, methionine, and other important biomolecules. Also exhibits THF-independent aldolase activity toward beta-hydroxyamino acids, producing glycine and aldehydes, via a retro-aldol mechanism. The sequence is that of Serine hydroxymethyltransferase from Coxiella burnetii (strain RSA 493 / Nine Mile phase I).